Consider the following 141-residue polypeptide: Hemoglobin subunit alpha (141 aa).

The 141-residue stretch at 1-141 folds into the Globin domain; the sequence is VLSPADKTNV…VSTVLTSKYR (141 aa). The residue at position 3 (serine 3) is a Phosphoserine. The residue at position 7 (lysine 7) is an N6-succinyllysine. Threonine 8 is modified (phosphothreonine). Lysine 11 is modified (N6-succinyllysine). Lysine 16 carries the post-translational modification N6-acetyllysine; alternate. N6-succinyllysine; alternate is present on lysine 16. Tyrosine 24 is subject to Phosphotyrosine. Phosphoserine is present on serine 35. Lysine 40 carries the N6-succinyllysine modification. The residue at position 49 (serine 49) is a Phosphoserine. O2 is bound at residue histidine 58. Histidine 87 is a binding site for heme b. The residue at position 102 (serine 102) is a Phosphoserine. At threonine 108 the chain carries Phosphothreonine. Phosphoserine is present on residues serine 124 and serine 131. Phosphothreonine is present on residues threonine 134 and threonine 137. Serine 138 carries the post-translational modification Phosphoserine.

Belongs to the globin family. Heterotetramer of two alpha chains and two beta chains. As to expression, red blood cells.

In terms of biological role, involved in oxygen transport from the lung to the various peripheral tissues. Functionally, hemopressin acts as an antagonist peptide of the cannabinoid receptor CNR1. Hemopressin-binding efficiently blocks cannabinoid receptor CNR1 and subsequent signaling. This Cebus capucinus (White-faced sapajou) protein is Hemoglobin subunit alpha (HBA).